Consider the following 69-residue polypeptide: Brevinin-1CG5 (69 aa).

An N-terminal signal peptide occupies residues 1-22 (MFTLKKSLLLLFFLGTINLSLC). Residues 23–43 (EQERNAEEERRDDDEMDVEVE) constitute a propeptide, removed in mature form. Cysteines 63 and 69 form a disulfide.

This sequence belongs to the frog skin active peptide (FSAP) family. Brevinin subfamily. As to expression, expressed by the skin glands.

It is found in the secreted. Antimicrobial peptide active against a variety of Gram-positive and Gram-negative bacterial strains. Has antifungal activity against C.albicans ATCC 10231 and a slime mold isolate. Has hemolytic activity against human erythrocytes. The polypeptide is Brevinin-1CG5 (Amolops chunganensis (Chungan torrent frog)).